The sequence spans 335 residues: Nucleoid-associated protein YejK (335 aa).

Belongs to the YejK family.

The protein localises to the cytoplasm. It localises to the nucleoid. This is Nucleoid-associated protein YejK from Salmonella schwarzengrund (strain CVM19633).